The sequence spans 462 residues: Cysteine--tRNA ligase (462 aa).

Cysteine 29 contributes to the Zn(2+) binding site. The 'HIGH' region signature appears at 31–41; sequence PTVYDHAHIGN. Zn(2+)-binding residues include cysteine 214, histidine 239, and glutamate 243. Positions 272-276 match the 'KMSKS' region motif; the sequence is KMSKS. Lysine 275 is an ATP binding site.

This sequence belongs to the class-I aminoacyl-tRNA synthetase family. Monomer. It depends on Zn(2+) as a cofactor.

It localises to the cytoplasm. It catalyses the reaction tRNA(Cys) + L-cysteine + ATP = L-cysteinyl-tRNA(Cys) + AMP + diphosphate. The sequence is that of Cysteine--tRNA ligase from Xanthobacter autotrophicus (strain ATCC BAA-1158 / Py2).